The sequence spans 367 residues: UDP-N-acetylglucosamine--N-acetylmuramyl-(pentapeptide) pyrophosphoryl-undecaprenol N-acetylglucosamine transferase (367 aa).

UDP-N-acetyl-alpha-D-glucosamine-binding positions include 15 to 17 (TGG), Asn127, Arg163, Ser191, Ile249, and Gln294.

Belongs to the glycosyltransferase 28 family. MurG subfamily.

The protein resides in the cell inner membrane. It carries out the reaction di-trans,octa-cis-undecaprenyl diphospho-N-acetyl-alpha-D-muramoyl-L-alanyl-D-glutamyl-meso-2,6-diaminopimeloyl-D-alanyl-D-alanine + UDP-N-acetyl-alpha-D-glucosamine = di-trans,octa-cis-undecaprenyl diphospho-[N-acetyl-alpha-D-glucosaminyl-(1-&gt;4)]-N-acetyl-alpha-D-muramoyl-L-alanyl-D-glutamyl-meso-2,6-diaminopimeloyl-D-alanyl-D-alanine + UDP + H(+). Its pathway is cell wall biogenesis; peptidoglycan biosynthesis. Its function is as follows. Cell wall formation. Catalyzes the transfer of a GlcNAc subunit on undecaprenyl-pyrophosphoryl-MurNAc-pentapeptide (lipid intermediate I) to form undecaprenyl-pyrophosphoryl-MurNAc-(pentapeptide)GlcNAc (lipid intermediate II). This chain is UDP-N-acetylglucosamine--N-acetylmuramyl-(pentapeptide) pyrophosphoryl-undecaprenol N-acetylglucosamine transferase, found in Burkholderia vietnamiensis (strain G4 / LMG 22486) (Burkholderia cepacia (strain R1808)).